The primary structure comprises 1051 residues: Carbamoyl phosphate synthase large chain (1051 aa).

The interval 1–399 is carboxyphosphate synthetic domain; that stretch reads MKETPKKVLV…SLQKAVRMLD (399 aa). Residues Arg-127, Arg-167, Gly-173, Gly-174, Lys-206, Leu-208, Glu-213, Gly-239, Val-240, His-241, Gln-282, and Glu-296 each contribute to the ATP site. Residues 131–325 enclose the ATP-grasp 1 domain; sequence RETMIENNLP…LAYVSAKLAL (195 aa). The Mg(2+) site is built by Gln-282, Glu-296, and Asn-298. The Mn(2+) site is built by Gln-282, Glu-296, and Asn-298. The tract at residues 400–548 is oligomerization domain; sequence IGEPGVVGGK…LTYNGTEDDL (149 aa). Residues 549-930 are carbamoyl phosphate synthetic domain; it reads EFSQGNKLLI…LKSWLSSIPN (382 aa). In terms of domain architecture, ATP-grasp 2 spans 673–863; the sequence is SKLLDKLGIS…LINEAMKAIF (191 aa). ATP contacts are provided by Arg-709, Lys-748, Ile-750, Glu-755, Gly-779, Val-780, His-781, Ser-782, Gln-822, and Glu-834. Mg(2+)-binding residues include Gln-822, Glu-834, and Asn-836. The Mn(2+) site is built by Gln-822, Glu-834, and Asn-836. In terms of domain architecture, MGS-like spans 930–1051; that stretch reads NRIPNKNGIA…FEISEYGGGI (122 aa). Residues 931–1051 form an allosteric domain region; sequence RIPNKNGIAL…FEISEYGGGI (121 aa).

The protein belongs to the CarB family. As to quaternary structure, composed of two chains; the small (or glutamine) chain promotes the hydrolysis of glutamine to ammonia, which is used by the large (or ammonia) chain to synthesize carbamoyl phosphate. Tetramer of heterodimers (alpha,beta)4. Mg(2+) serves as cofactor. Mn(2+) is required as a cofactor.

It carries out the reaction hydrogencarbonate + L-glutamine + 2 ATP + H2O = carbamoyl phosphate + L-glutamate + 2 ADP + phosphate + 2 H(+). The catalysed reaction is hydrogencarbonate + NH4(+) + 2 ATP = carbamoyl phosphate + 2 ADP + phosphate + 2 H(+). It participates in amino-acid biosynthesis; L-arginine biosynthesis; carbamoyl phosphate from bicarbonate: step 1/1. The protein operates within pyrimidine metabolism; UMP biosynthesis via de novo pathway; (S)-dihydroorotate from bicarbonate: step 1/3. Its function is as follows. Large subunit of the glutamine-dependent carbamoyl phosphate synthetase (CPSase). CPSase catalyzes the formation of carbamoyl phosphate from the ammonia moiety of glutamine, carbonate, and phosphate donated by ATP, constituting the first step of 2 biosynthetic pathways, one leading to arginine and/or urea and the other to pyrimidine nucleotides. The large subunit (synthetase) binds the substrates ammonia (free or transferred from glutamine from the small subunit), hydrogencarbonate and ATP and carries out an ATP-coupled ligase reaction, activating hydrogencarbonate by forming carboxy phosphate which reacts with ammonia to form carbamoyl phosphate. In Saccharolobus islandicus (strain L.S.2.15 / Lassen #1) (Sulfolobus islandicus), this protein is Carbamoyl phosphate synthase large chain.